Consider the following 222-residue polypeptide: Ornithine decarboxylase antizyme 1 (222 aa).

The protein belongs to the ODC antizyme family. In terms of assembly, interacts with ODC1 and thereby sterically blocks ODC homodimerization. Forms a ternary complex with PSMB4 and OAZ1 before PSMB4 is incorporated into the 20S proteasome. Interacts with AZIN2; this interaction disrupts the interaction between the antizyme and ODC1. Interacts with FAM171A1.

Functionally, ornithine decarboxylase (ODC) antizyme protein that negatively regulates ODC activity and intracellular polyamine biosynthesis and uptake in response to increased intracellular polyamine levels. Binds to ODC monomers, inhibiting the assembly of the functional ODC homodimer, and targets the monomers for ubiquitin-independent proteolytic destruction by the 26S proteasome. Triggers ODC degradation by inducing the exposure of a cryptic proteasome-interacting surface of ODC. Stabilizes AZIN2 by interfering with its ubiquitination. Also inhibits cellular uptake of polyamines by inactivating the polyamine uptake transporter. SMAD1/OAZ1/PSMB4 complex mediates the degradation of the CREBBP/EP300 repressor SNIP1. Involved in the translocation of AZIN2 from ER-Golgi intermediate compartment (ERGIC) to the cytosol. The sequence is that of Ornithine decarboxylase antizyme 1 (OAZ1) from Mesocricetus auratus (Golden hamster).